We begin with the raw amino-acid sequence, 584 residues long: 2-succinyl-5-enolpyruvyl-6-hydroxy-3-cyclohexene-1-carboxylate synthase (584 aa).

This sequence belongs to the TPP enzyme family. MenD subfamily. Homodimer. The cofactor is Mg(2+). Mn(2+) is required as a cofactor. It depends on thiamine diphosphate as a cofactor.

The enzyme catalyses isochorismate + 2-oxoglutarate + H(+) = 5-enolpyruvoyl-6-hydroxy-2-succinyl-cyclohex-3-ene-1-carboxylate + CO2. The protein operates within quinol/quinone metabolism; 1,4-dihydroxy-2-naphthoate biosynthesis; 1,4-dihydroxy-2-naphthoate from chorismate: step 2/7. Its pathway is quinol/quinone metabolism; menaquinone biosynthesis. Its function is as follows. Catalyzes the thiamine diphosphate-dependent decarboxylation of 2-oxoglutarate and the subsequent addition of the resulting succinic semialdehyde-thiamine pyrophosphate anion to isochorismate to yield 2-succinyl-5-enolpyruvyl-6-hydroxy-3-cyclohexene-1-carboxylate (SEPHCHC). The chain is 2-succinyl-5-enolpyruvyl-6-hydroxy-3-cyclohexene-1-carboxylate synthase from Bacillus cereus (strain ZK / E33L).